The chain runs to 54 residues: uncharacterized protein (54 aa).

A compositionally biased stretch (basic and acidic residues) spans 1–28; sequence MDRKKDEIQRKYREQMREKKEREKEDGS. The tract at residues 1-29 is disordered; the sequence is MDRKKDEIQRKYREQMREKKEREKEDGSS. The chain crosses the membrane as a helical span at residues 31-51; the sequence is TFEIVVVLAIIILMFFFNSVF.

It localises to the cell membrane. This is an uncharacterized protein from Bacillus subtilis (strain 168).